A 178-amino-acid polypeptide reads, in one-letter code: Gamma-crystallin S (178 aa).

Serine 2 carries the N-acetylserine modification. The tract at residues 2 to 5 (SKSG) is N-terminal arm. Beta/gamma crystallin 'Greek key' domains are found at residues 6–44 (TKIT…RVEG) and 45–87 (GTWA…RAVH). Positions 88 to 93 (LSSGGQ) are connecting peptide. 2 Beta/gamma crystallin 'Greek key' domains span residues 94–134 (YKIQ…KVLD) and 135–177 (GVWI…RRIV).

Belongs to the beta/gamma-crystallin family. As to quaternary structure, monomer.

Its function is as follows. Crystallins are the dominant structural components of the vertebrate eye lens. The chain is Gamma-crystallin S (CRYGS) from Canis lupus familiaris (Dog).